The following is a 24-amino-acid chain: Fibrinogen gamma chain (24 aa).

In terms of assembly, heterohexamer; disulfide linked. Contains 2 sets of 3 non-identical chains (alpha, beta and gamma). The 2 heterotrimers are in head to head conformation with the N-termini in a small central domain. Conversion of fibrinogen to fibrin is triggered by thrombin, which cleaves fibrinopeptides A and B from alpha and beta chains, and thus exposes the N-terminal polymerization sites responsible for the formation of the soft clot. The soft clot is converted into the hard clot by factor XIIIA which catalyzes the epsilon-(gamma-glutamyl)lysine cross-linking between gamma chains (stronger) and between alpha chains (weaker) of different monomers.

The protein resides in the secreted. Functionally, together with fibrinogen alpha (FGA) and fibrinogen beta (FGB), polymerizes to form an insoluble fibrin matrix. Has a major function in hemostasis as one of the primary components of blood clots. In addition, functions during the early stages of wound repair to stabilize the lesion and guide cell migration during re-epithelialization. Was originally thought to be essential for platelet aggregation, based on in vitro studies using anticoagulated blood. However, subsequent studies have shown that it is not absolutely required for thrombus formation in vivo. Enhances expression of SELP in activated platelets via an ITGB3-dependent pathway. Maternal fibrinogen is essential for successful pregnancy. Fibrin deposition is also associated with infection, where it protects against IFNG-mediated hemorrhage. May also facilitate the antibacterial immune response via both innate and T-cell mediated pathways. This chain is Fibrinogen gamma chain (FGG), found in Canis lupus familiaris (Dog).